Consider the following 244-residue polypeptide: uncharacterized protein (244 aa).

Residues 12 to 80 (VALWRQIADR…QGRGTMIERK (69 aa)) enclose the HTH gntR-type domain. A DNA-binding region (H-T-H motif) is located at residues 40-59 (ETALAAEFGVNRHTVRSALA).

This is an uncharacterized protein from Rhizobium meliloti (strain 1021) (Ensifer meliloti).